The following is a 445-amino-acid chain: Solute carrier family 52, riboflavin transporter, member 2 (445 aa).

Helical transmembrane passes span 14 to 34 (LLVA…WVEL), 47 to 67 (LPSY…VVTL), 86 to 106 (VLGM…APVA), 112 to 132 (VAFL…NVTF), 147 to 167 (FFLG…VQGV), and 196 to 216 (FFWA…GLLL). The interval 228–264 (ELGSGLQVGAPGAEEEVEESSPLQEPPSQAAGTTPGP) is disordered. Residues 247–258 (SSPLQEPPSQAA) are compositionally biased toward low complexity. 5 helical membrane-spanning segments follow: residues 277–297 (ACLL…LPAV), 312–332 (LAVV…MGVL), 339–359 (LGGL…LAVL), 366–386 (VGTS…LGVF), and 404–424 (ALLA…VAMF).

The protein belongs to the riboflavin transporter family. Highly expressed in brain, fetal brain and salivary gland. Weakly expressed in other tissues.

The protein resides in the cell membrane. It carries out the reaction riboflavin(in) = riboflavin(out). With respect to regulation, riboflavin transport is Na(+)-independent but moderately pH-sensitive. Activity is strongly inhibited by riboflavin analogs, such as lumiflavin. Weakly inhibited by flavin adenine dinucleotide (FAD) and flavin mononucleotide (FMN). In terms of biological role, plasma membrane transporter mediating the uptake by cells of the water soluble vitamin B2/riboflavin that plays a key role in biochemical oxidation-reduction reactions of the carbohydrate, lipid, and amino acid metabolism. Humans are unable to synthesize vitamin B2/riboflavin and must obtain it via intestinal absorption. May also act as a receptor for 4-hydroxybutyrate. Functionally, (Microbial infection) In case of infection by retroviruses, acts as a cell receptor to retroviral envelopes similar to the porcine endogenous retrovirus (PERV-A). This is Solute carrier family 52, riboflavin transporter, member 2 (SLC52A2) from Homo sapiens (Human).